A 198-amino-acid chain; its full sequence is MYEYFEGIIQAVTPAYIVIDVHGIGFRLLVANPYHFEAGEQKRVYVQLIIRDNDQTLYGFEGAADKRTFNQLLTVTGIGPKSALAILANVSSGGLATAIAQDDVKFLTKFPGIGKKTAAQIILDLKGKITTDGQPAAAAIAPVASDVDSELADALAALVALGYPQRTVDGLTDTLKAFSAKTTDAYLREGLRLLSGKA.

A domain I region spans residues 1 to 61; that stretch reads MYEYFEGIIQ…DNDQTLYGFE (61 aa). The tract at residues 62 to 140 is domain II; that stretch reads GAADKRTFNQ…TDGQPAAAAI (79 aa). The flexible linker stretch occupies residues 141–145; sequence APVAS. Residues 146–198 form a domain III region; the sequence is DVDSELADALAALVALGYPQRTVDGLTDTLKAFSAKTTDAYLREGLRLLSGKA.

It belongs to the RuvA family. As to quaternary structure, homotetramer. Forms an RuvA(8)-RuvB(12)-Holliday junction (HJ) complex. HJ DNA is sandwiched between 2 RuvA tetramers; dsDNA enters through RuvA and exits via RuvB. An RuvB hexamer assembles on each DNA strand where it exits the tetramer. Each RuvB hexamer is contacted by two RuvA subunits (via domain III) on 2 adjacent RuvB subunits; this complex drives branch migration. In the full resolvosome a probable DNA-RuvA(4)-RuvB(12)-RuvC(2) complex forms which resolves the HJ.

The protein resides in the cytoplasm. Its function is as follows. The RuvA-RuvB-RuvC complex processes Holliday junction (HJ) DNA during genetic recombination and DNA repair, while the RuvA-RuvB complex plays an important role in the rescue of blocked DNA replication forks via replication fork reversal (RFR). RuvA specifically binds to HJ cruciform DNA, conferring on it an open structure. The RuvB hexamer acts as an ATP-dependent pump, pulling dsDNA into and through the RuvAB complex. HJ branch migration allows RuvC to scan DNA until it finds its consensus sequence, where it cleaves and resolves the cruciform DNA. The polypeptide is Holliday junction branch migration complex subunit RuvA (Lacticaseibacillus casei (strain BL23) (Lactobacillus casei)).